A 940-amino-acid chain; its full sequence is Receptor-like protein 9b (940 aa).

An N-terminal signal peptide occupies residues 1 to 28 (MLMMFSPAFVMVMDLMVLVMMIMMMVSS). Residues 29-895 (LDAHGHISCI…GDEETTIDME (867 aa)) are Extracellular-facing. N-linked (GlcNAc...) asparagine glycans are attached at residues N53, N63, N66, N101, N115, and N151. 16 LRR repeats span residues 108-136 (FGELQTLNLSNFWCQGWFDHIHGYKSFER), 137-163 (LKNLEILDISENGVNNTVLPFINTASS), 165-185 (KTLILHGNNMEGTFPMKELIN), 186-211 (LRNLELLDLSKNQFVGPVPDLANFHN), 213-232 (QGLDMSDNKFSGSNKGLCQL), 233-255 (KNLRELDLSQNKFTGQFPQCFDS), 257-279 (TQLQVLDISSNNFNGTVPSLIRN), 281-304 (DSVEYLALSDNEFKGFFSLELIAN), 306-330 (SKLKVFKLSSRSNLLRLKKLSSLQP), 331-354 (KFQLSVIELQNCNLENVPSFIQHQ), 355-378 (KDLHVINLSNNKLTGVFPYWLLEK), 379-402 (YPNLRVLLLQNNSLTMLELPRLLN), 403-426 (HTLQILDLSANNFDQRLPENIGKV), 427-450 (LPNIRHLNLSNNGFQWILPSSFGE), 452-475 (KDIKFLDLSHNNFSGSLPMKFLIG), and 477-502 (SSLHTLKLSYNKFFGQIFPKQTNFGS). N-linked (GlcNAc...) asparagine glycans are attached at residues N270 and N304. N-linked (GlcNAc...) asparagine glycosylation is found at N361, N389, and N402. N-linked (GlcNAc...) asparagine glycans are attached at residues N434 and N463. An LRR 17; degenerate repeat occupies 503 to 522 (LVVLIANNNLFTGIADGLRN). LRR repeat units lie at residues 523–546 (VQSLGVLDLSNNYLQGVIPSWFGG), 547–570 (FFFAYLFLSNNLLEGTLPSTLFSK), 571–593 (PTFKILDLSGNKFSGNLPSHFTG), 595–615 (DMSLLYLNDNEFSGTIPSTLI), 616–639 (KDVLVLDLRNNKLSGTIPHFVKNE), 641–662 (ILSLLLRGNTLTGHIPTDLCGL), 663–686 (RSIRILDLANNRLKGSIPTCLNNV), 752–776 (FNFMFGLDLSSNELSGDIPKELGDL), 777–799 (QRIRALNLSHNSLSGLIPQSFSN), 801–824 (TDIESIDLSFNLLRGPIPQDLSKL), and 826–849 (YMVVFNVSYNNLSGSIPSHGKFST). N685 carries an N-linked (GlcNAc...) asparagine glycan. N-linked (GlcNAc...) asparagine glycans are attached at residues N783 and N799. Residues N831, N836, N867, and N873 are each glycosylated (N-linked (GlcNAc...) asparagine). The helical transmembrane segment at 896–916 (IFYWSLAATYGVTWITFIVFL) threads the bilayer. The Cytoplasmic segment spans residues 917-940 (CFDSPWRRVWFHFVDAFISLFKCV).

The protein belongs to the RLP family.

The protein localises to the cell membrane. This chain is Receptor-like protein 9b, found in Arabidopsis thaliana (Mouse-ear cress).